Reading from the N-terminus, the 144-residue chain is 3-hydroxyacyl-[acyl-carrier-protein] dehydratase FabZ (144 aa).

The active site involves His51.

The protein belongs to the thioester dehydratase family. FabZ subfamily.

The protein localises to the cytoplasm. It carries out the reaction a (3R)-hydroxyacyl-[ACP] = a (2E)-enoyl-[ACP] + H2O. Its function is as follows. Involved in unsaturated fatty acids biosynthesis. Catalyzes the dehydration of short chain beta-hydroxyacyl-ACPs and long chain saturated and unsaturated beta-hydroxyacyl-ACPs. This chain is 3-hydroxyacyl-[acyl-carrier-protein] dehydratase FabZ, found in Clostridium botulinum (strain Langeland / NCTC 10281 / Type F).